The primary structure comprises 602 residues: Beta-(1--&gt;2)glucan export ATP-binding/permease protein NdvA (602 aa).

One can recognise an ABC transmembrane type-1 domain in the interval 21-311; it reads GWTLAVANLL…VVSFVNSLMM (291 aa). The next 6 membrane-spanning stretches (helical) occupy residues 22-42, 68-88, 146-166, 167-187, 254-274, and 276-296; these read WTLA…PVLF, LLAA…TVAL, EHFA…YINW, RLAI…TLVV, VITR…GIAL, and QQGL…TLLI. Positions 345-579 constitute an ABC transporter domain; sequence VEFLDVSFSY…RGRFAELARA (235 aa). 378–385 lines the ATP pocket; that stretch reads GATGAGKS.

The protein belongs to the ABC transporter superfamily. Beta-(1--&gt;2)glucan exporter (TC 3.A.1.108.1) family. As to quaternary structure, homodimer.

It localises to the cell inner membrane. The enzyme catalyses [(1-&gt;2)-beta-D-glucosyl](n)(in) + ATP + H2O = [(1-&gt;2)-beta-D-glucosyl](n)(out) + ADP + phosphate + H(+). Functionally, involved in beta-(1--&gt;2)glucan export. Transmembrane domains (TMD) form a pore in the inner membrane and the ATP-binding domain (NBD) is responsible for energy generation. The sequence is that of Beta-(1--&gt;2)glucan export ATP-binding/permease protein NdvA from Rhodopseudomonas palustris (strain BisB5).